Here is a 160-residue protein sequence, read N- to C-terminus: Putative NrdI-like protein (160 aa).

It belongs to the NrdI family.

The sequence is that of Putative NrdI-like protein from Streptococcus pyogenes serotype M1.